Reading from the N-terminus, the 201-residue chain is Lipoprotein signal peptidase (201 aa).

A run of 2 helical transmembrane segments spans residues S73–I93 and T97–D117. Active-site residues include D126 and D144. A helical membrane pass occupies residues Y135 to I155.

The protein belongs to the peptidase A8 family.

The protein resides in the cell inner membrane. It carries out the reaction Release of signal peptides from bacterial membrane prolipoproteins. Hydrolyzes -Xaa-Yaa-Zaa-|-(S,diacylglyceryl)Cys-, in which Xaa is hydrophobic (preferably Leu), and Yaa (Ala or Ser) and Zaa (Gly or Ala) have small, neutral side chains.. It participates in protein modification; lipoprotein biosynthesis (signal peptide cleavage). Its function is as follows. This protein specifically catalyzes the removal of signal peptides from prolipoproteins. In Rickettsia conorii (strain ATCC VR-613 / Malish 7), this protein is Lipoprotein signal peptidase.